The chain runs to 255 residues: Imidazole glycerol phosphate synthase subunit HisF (255 aa).

Catalysis depends on residues Asp-11 and Asp-130.

Belongs to the HisA/HisF family. In terms of assembly, heterodimer of HisH and HisF.

The protein resides in the cytoplasm. The enzyme catalyses 5-[(5-phospho-1-deoxy-D-ribulos-1-ylimino)methylamino]-1-(5-phospho-beta-D-ribosyl)imidazole-4-carboxamide + L-glutamine = D-erythro-1-(imidazol-4-yl)glycerol 3-phosphate + 5-amino-1-(5-phospho-beta-D-ribosyl)imidazole-4-carboxamide + L-glutamate + H(+). Its pathway is amino-acid biosynthesis; L-histidine biosynthesis; L-histidine from 5-phospho-alpha-D-ribose 1-diphosphate: step 5/9. In terms of biological role, IGPS catalyzes the conversion of PRFAR and glutamine to IGP, AICAR and glutamate. The HisF subunit catalyzes the cyclization activity that produces IGP and AICAR from PRFAR using the ammonia provided by the HisH subunit. The chain is Imidazole glycerol phosphate synthase subunit HisF from Rhodopseudomonas palustris (strain ATCC BAA-98 / CGA009).